We begin with the raw amino-acid sequence, 63 residues long: Large ribosomal subunit protein uL29 (63 aa).

Belongs to the universal ribosomal protein uL29 family.

In Herminiimonas arsenicoxydans, this protein is Large ribosomal subunit protein uL29.